The sequence spans 667 residues: Homeobox protein 3 (667 aa).

Disordered regions lie at residues 44-108, 179-232, 249-268, and 331-418; these read FFQP…NSSI, NNNN…TVYN, NNNN…VNNN, and STNK…YQKQ. Pro residues predominate over residues 52 to 63; sequence LPPPTNQQPQPQ. The span at 75 to 96 shows a compositional bias: polar residues; that stretch reads CNSSFENSPQQPTSPLLISSQT. Residues 97 to 108 are compositionally biased toward low complexity; the sequence is SYPSDLSSNSSI. Basic residues predominate over residues 334-343; that stretch reads KRMKISHHSH. Positions 344–379 are enriched in low complexity; sequence SLSNNNENSLSQPYFNNNNNNNNENENVYNIVNEQN. The span at 380 to 390 shows a compositional bias: polar residues; that stretch reads PTFNPNQSNTH. Residues 386–454 are a coiled coil; sequence QSNTHQQQEE…ENENVICSEF (69 aa). The homeobox DNA-binding region spans 602–664; that stretch reads EFKSRRILSE…NKRMRDKSNK (63 aa).

The protein resides in the nucleus. Putative transcription factor. In Dictyostelium discoideum (Social amoeba), this protein is Homeobox protein 3 (hbx3).